Reading from the N-terminus, the 120-residue chain is Anti-adapter protein IraM (120 aa).

Belongs to the IraM/RssC family.

It is found in the cytoplasm. Functionally, involved in the stabilization of the sigma stress factor RpoS. This is Anti-adapter protein IraM from Salmonella choleraesuis (strain SC-B67).